The chain runs to 438 residues: MPVAASAIYFLNLRGDVLINRTYRDDVGGNMVDAFRTHIMQTKELGNCPVRQIGGCSFVYMRISNVYIVIVVSSNANVACGFKFVVEAVALFKSYFGGAFDEDAIRNNFVLIYELLDEIMDFGYPQNLSPEILKLYITQEGVRSPFSSKPKDKPVPNATLQVTGAVGWRREGLAYKKNEVFLDIVESVNLLMSSKGNVLRCDVTGKVLMKCFLSGMPDLKLGLNDKIGLEKESEMKSRPAKSGKTIELDDVTFHQCVNLTRFNSEKTVSFVPPDGEFELMKYRITEGVNLPFRVLPTIKELGRTRMEVNVKVKSVFGAKMFALGVVVKIPVPKQTAKTNFQVTTGRAKYNPSIDCLVWKIRKFPGQTESTLSAEIELISTMGEKKSWTRPPIQMEFQVPMFTASGLRVRFLKVWEKSGYNTVEWVRYITKAGSYEIRC.

Residues 177–437 (KNEVFLDIVE…ITKAGSYEIR (261 aa)) enclose the MHD domain.

The protein belongs to the adaptor complexes medium subunit family. As to quaternary structure, adaptor protein complex 2 (AP-2) is a heterotetramer composed of two large adaptins (alpha-type and beta-type subunits), a medium adaptin (mu-type subunit) and a small adaptin (sigma-type subunit).

It localises to the cell membrane. The protein resides in the membrane. It is found in the coated pit. Its subcellular location is the golgi apparatus. The protein localises to the trans-Golgi network membrane. Its function is as follows. Subunit of the adaptor protein complex 2 (AP-2). Adaptor protein complexes function in protein transport via transport vesicles in different membrane traffic pathways. Adaptor protein complexes are vesicle coat components and appear to be involved in cargo selection and vesicle formation. AP-2 is involved in clathrin-dependent endocytosis in which cargo proteins are incorporated into vesicles surrounded by clathrin (clathrin-coated vesicles, CCVs) which are destined for fusion with the early endosome. AP-2 recognizes Y-X-X-Phi endocytosis signal motif within the cytosolic tails of transmembrane cargo molecules. The complex binds polyphosphoinositides. This is AP-2 complex subunit mu (AP2M) from Arabidopsis thaliana (Mouse-ear cress).